Reading from the N-terminus, the 155-residue chain is Transcriptional repressor NrdR (155 aa).

The segment at 3–34 (CPNCHQNASRVIDSRPTDEGRTIRRRRECENC) is a zinc-finger region. The ATP-cone domain maps to 49 to 139 (LLVIKNDGTR…IYRQFTDMSS (91 aa)).

The protein belongs to the NrdR family. Zn(2+) serves as cofactor.

In terms of biological role, negatively regulates transcription of bacterial ribonucleotide reductase nrd genes and operons by binding to NrdR-boxes. The polypeptide is Transcriptional repressor NrdR (Lactobacillus delbrueckii subsp. bulgaricus (strain ATCC 11842 / DSM 20081 / BCRC 10696 / JCM 1002 / NBRC 13953 / NCIMB 11778 / NCTC 12712 / WDCM 00102 / Lb 14)).